A 64-amino-acid polypeptide reads, in one-letter code: Large ribosomal subunit protein uL30 (64 aa).

The disordered stretch occupies residues 1–22 (MAKAAKTIKVEQTGSAIRRHHS).

Belongs to the universal ribosomal protein uL30 family. As to quaternary structure, part of the 50S ribosomal subunit.

The sequence is that of Large ribosomal subunit protein uL30 from Nitrobacter winogradskyi (strain ATCC 25391 / DSM 10237 / CIP 104748 / NCIMB 11846 / Nb-255).